A 289-amino-acid polypeptide reads, in one-letter code: Probable endonuclease 4 (289 aa).

H74, H115, E150, D184, H187, H218, D231, H233, and E263 together coordinate Zn(2+).

It belongs to the AP endonuclease 2 family. Requires Zn(2+) as cofactor.

The catalysed reaction is Endonucleolytic cleavage to 5'-phosphooligonucleotide end-products.. Its function is as follows. Endonuclease IV plays a role in DNA repair. It cleaves phosphodiester bonds at apurinic or apyrimidinic (AP) sites, generating a 3'-hydroxyl group and a 5'-terminal sugar phosphate. This Mycoplasma mycoides subsp. mycoides SC (strain CCUG 32753 / NCTC 10114 / PG1) protein is Probable endonuclease 4.